Consider the following 499-residue polypeptide: Glycerol kinase (499 aa).

ADP is bound at residue threonine 13. ATP contacts are provided by threonine 13, threonine 14, and serine 15. Threonine 13 is a sn-glycerol 3-phosphate binding site. Arginine 17 lines the ADP pocket. The sn-glycerol 3-phosphate site is built by arginine 83, glutamate 84, tyrosine 135, and aspartate 245. Residues arginine 83, glutamate 84, tyrosine 135, aspartate 245, and glutamine 246 each contribute to the glycerol site. Residues threonine 267 and glycine 310 each contribute to the ADP site. Residues threonine 267, glycine 310, glutamine 314, and glycine 411 each coordinate ATP. ADP is bound by residues glycine 411 and asparagine 415.

It belongs to the FGGY kinase family.

It carries out the reaction glycerol + ATP = sn-glycerol 3-phosphate + ADP + H(+). It functions in the pathway polyol metabolism; glycerol degradation via glycerol kinase pathway; sn-glycerol 3-phosphate from glycerol: step 1/1. Inhibited by fructose 1,6-bisphosphate (FBP). In terms of biological role, key enzyme in the regulation of glycerol uptake and metabolism. Catalyzes the phosphorylation of glycerol to yield sn-glycerol 3-phosphate. The chain is Glycerol kinase from Xanthomonas campestris pv. campestris (strain ATCC 33913 / DSM 3586 / NCPPB 528 / LMG 568 / P 25).